The following is a 432-amino-acid chain: Ornithine decarboxylase 1A, chloroplastic (432 aa).

An N6-(pyridoxal phosphate)lysine modification is found at Lys95. Pyridoxal 5'-phosphate is bound by residues Ser227, Gly265, and 298 to 301; that span reads EPGR. A substrate-binding site is contributed by 341-342; it reads YD. Catalysis depends on Cys377, which acts as the Proton donor; shared with dimeric partner. Asp378 lines the substrate pocket. Tyr406 serves as a coordination point for pyridoxal 5'-phosphate.

It belongs to the Orn/Lys/Arg decarboxylase class-II family. In terms of assembly, homodimer. Only the dimer is catalytically active, as the active sites are constructed of residues from both monomers. Requires pyridoxal 5'-phosphate as cofactor.

It localises to the plastid. The protein localises to the chloroplast. It catalyses the reaction L-ornithine + H(+) = putrescine + CO2. The protein operates within alkaloid biosynthesis; nicotine biosynthesis. It functions in the pathway amine and polyamine biosynthesis; putrescine biosynthesis via L-ornithine pathway; putrescine from L-ornithine: step 1/1. In terms of biological role, involved in the biosynthesis of pyridine alkaloid natural products, leading mainly to the production of anabasine, anatabine, nicotine and nornicotine, effective deterrents against herbivores with antiparasitic and pesticide properties (neurotoxins); nornicotine serves as the precursor in the synthesis of the carcinogen compound N'-nitrosonornicotine (NNN). Catalyzes the first and rate-limiting step of polyamine biosynthesis that converts ornithine into putrescine, which is the precursor for the polyamines, spermidine and spermine. Polyamines are essential for cell proliferation and are implicated in cellular processes, ranging from DNA replication to apoptosis. This is Ornithine decarboxylase 1A, chloroplastic from Nicotiana tabacum (Common tobacco).